We begin with the raw amino-acid sequence, 301 residues long: UDP-N-acetylenolpyruvoylglucosamine reductase (301 aa).

The FAD-binding PCMH-type domain maps to 30-194 (VGGEPDYLVF…LSAKFALAPG (165 aa)). Arg-173 is an active-site residue. The Proton donor role is filled by Ser-223. The active site involves Glu-293.

It belongs to the MurB family. It depends on FAD as a cofactor.

It localises to the cytoplasm. It carries out the reaction UDP-N-acetyl-alpha-D-muramate + NADP(+) = UDP-N-acetyl-3-O-(1-carboxyvinyl)-alpha-D-glucosamine + NADPH + H(+). The protein operates within cell wall biogenesis; peptidoglycan biosynthesis. Functionally, cell wall formation. The protein is UDP-N-acetylenolpyruvoylglucosamine reductase of Streptococcus pneumoniae (strain CGSP14).